We begin with the raw amino-acid sequence, 813 residues long: Protein translocase subunit SecA 2 (813 aa).

Residues Q105, 123-127 (GEGKT), and D525 each bind ATP.

Belongs to the SecA family. Monomer and homodimer. Part of the essential Sec protein translocation apparatus which comprises SecA, SecYEG and auxiliary proteins SecDF-YajC and YidC.

Its subcellular location is the cell inner membrane. The protein localises to the cytoplasm. It carries out the reaction ATP + H2O + cellular proteinSide 1 = ADP + phosphate + cellular proteinSide 2.. Its function is as follows. Part of the Sec protein translocase complex. Interacts with the SecYEG preprotein conducting channel. Has a central role in coupling the hydrolysis of ATP to the transfer of proteins into and across the cell membrane, serving both as a receptor for the preprotein-SecB complex and as an ATP-driven molecular motor driving the stepwise translocation of polypeptide chains across the membrane. This Rhodopseudomonas palustris (strain BisA53) protein is Protein translocase subunit SecA 2.